The chain runs to 259 residues: 5'-nucleotidase SurE (259 aa).

A divalent metal cation is bound by residues aspartate 8, aspartate 9, serine 40, and asparagine 95.

It belongs to the SurE nucleotidase family. A divalent metal cation is required as a cofactor.

It localises to the cytoplasm. The catalysed reaction is a ribonucleoside 5'-phosphate + H2O = a ribonucleoside + phosphate. Its function is as follows. Nucleotidase that shows phosphatase activity on nucleoside 5'-monophosphates. The polypeptide is 5'-nucleotidase SurE (Oleidesulfovibrio alaskensis (strain ATCC BAA-1058 / DSM 17464 / G20) (Desulfovibrio alaskensis)).